The chain runs to 153 residues: Peptide methionine sulfoxide reductase B6 (153 aa).

Residues 28 to 149 enclose the MsrB domain; it reads NEEWRTVLSP…NSVALKFSSA (122 aa). Zn(2+) is bound by residues Cys67, Cys70, Cys113, and Cys116. An intrachain disulfide couples Cys85 to Cys138. Catalysis depends on Cys138, which acts as the Nucleophile.

This sequence belongs to the MsrB Met sulfoxide reductase family. Zn(2+) serves as cofactor.

The protein localises to the cytoplasm. Its subcellular location is the cytosol. The catalysed reaction is L-methionyl-[protein] + [thioredoxin]-disulfide + H2O = L-methionyl-(R)-S-oxide-[protein] + [thioredoxin]-dithiol. Catalyzes the reduction of methionine sulfoxide (MetSO) to methionine in proteins. Plays a protective role against oxidative stress by restoring activity to proteins that have been inactivated by methionine oxidation. MSRB family specifically reduces the MetSO R-enantiomer. The sequence is that of Peptide methionine sulfoxide reductase B6 (MSRB6) from Arabidopsis thaliana (Mouse-ear cress).